The following is a 405-amino-acid chain: MNKTILWSFLLFFSGSQTSRATDQKIADFAVDLYKAISLSHKNNIIFSPLGTTMLLGMVQLGAKGKAQQQILKTLRMRGTPAGEEFSVLKSLFSAISKKKQEFTFNLASALYLQEGFIVKETYLHSNKEFFQSATKLVDFLDAKTSAQAISTWVESKTDGKIKNMFSEEEFGPLTRLVLVNAIYFKGDWKQKFRKEDTEMTDFTKKDGSTVKVPMMKALLRAQYGYFSQSSMTCQVLELPYKADEFSLVIILPTEDTSIEEVENQVTAPHVRRWFSELHEEEVEVSLPRFKIEQKLDLKEALYSLNVTEIFSGGCDLSGITDSSEVYVSRVMQKVFFEINEDGSEAAASTGINIPAIMSLTQTQFLANHPFLFILKHIRTESILFMGKVTDPDIQTTKGRDLDSL.

The signal sequence occupies residues 1-18 (MNKTILWSFLLFFSGSQT). An N-linked (GlcNAc...) asparagine glycan is attached at Asn-306.

Belongs to the serpin family. Expressed in pancreas.

Its subcellular location is the secreted. This Mus musculus (Mouse) protein is Serpin I2 (Serpini2).